Consider the following 322-residue polypeptide: MNNIGITVYGCEQDEADAFHALSPRFGVMATIINANVSESNAKSAPFNQCISVGHKSEISASILLALKRAGVKYISTRSIGCNHIDTTAAKRMGITVDNVAYSPDSVADYTMMLILMAVRNVKSIVRSVEKHDFRLDSDRGKVLSDMTVGVVGTGQIGKAVIERLRGFGCKVLAYSRSRSIEVNYVPFDELLQNSDIVTLHVPLNTDTHYIISHEQIQRMKQGAFLINTGRGPLVDTYELVKALENGKLGGAALDVLEGEEEFFYSDCTQKPIDNQFLLKLQRMPNVIITPHTAYYTEQALRDTVEKTIKNCLDFERRQEHE.

NAD(+) contacts are provided by residues 156-157 (QI), 229-231 (TGR), and D255. R231 is a catalytic residue. The active site involves E260. H292 acts as the Proton donor in catalysis. 292–295 (HTAY) serves as a coordination point for NAD(+).

It belongs to the D-isomer specific 2-hydroxyacid dehydrogenase family.

It catalyses the reaction a (2R)-2-hydroxycarboxylate + NADP(+) = a 2-oxocarboxylate + NADPH + H(+). It carries out the reaction a (2R)-2-hydroxycarboxylate + NAD(+) = a 2-oxocarboxylate + NADH + H(+). The catalysed reaction is (R)-lactate + NADP(+) = pyruvate + NADPH + H(+). The enzyme catalyses (R)-lactate + NAD(+) = pyruvate + NADH + H(+). It catalyses the reaction (2R)-hydroxybutanoate + NADP(+) = 2-oxobutanoate + NADPH + H(+). Functionally, required for high-level resistance to glycopeptide antibiotics. Catalyzes the reduction of 2-keto acids to 2-D-hydroxy acids, exhibiting highest catalytic efficiency with pyruvate and 2-oxobutanoate/alpha-ketobutyrate as substrates, producing D-lactate and (2R)-hydroxybutanoate, respectively. Together with D-alanine--D-lactate ligase VanA, gives rise to peptidoglycan precursors that terminate in the depsipeptide D-alanine-D-lactate rather than the dipeptide D-alanine-D-alanine thus preventing vancomycin binding. Shows a slight preference for NADPH over NADH as the electron donor. The protein is D-specific alpha-keto acid dehydrogenase of Enterococcus faecium (Streptococcus faecium).